The following is a 206-amino-acid chain: High frequency lysogenization protein HflD homolog (206 aa).

This sequence belongs to the HflD family.

It localises to the cytoplasm. The protein localises to the cell inner membrane. The chain is High frequency lysogenization protein HflD homolog from Pseudomonas syringae pv. syringae (strain B728a).